A 209-amino-acid polypeptide reads, in one-letter code: Probable phosphatidylglycerophosphate synthase (209 aa).

The next 4 membrane-spanning stretches (helical) occupy residues 32–52 (ILTL…FYGG), 105–125 (ALIG…LILT), 147–167 (WGGK…VLPL), and 171–191 (LHVA…ITGV).

Belongs to the CDP-alcohol phosphatidyltransferase class-I family.

The protein localises to the cell membrane. It catalyses the reaction a CDP-1,2-diacyl-sn-glycerol + sn-glycerol 3-phosphate = a 1,2-diacyl-sn-glycero-3-phospho-(1'-sn-glycero-3'-phosphate) + CMP + H(+). It functions in the pathway lipid metabolism; phospholipid metabolism. Probably catalyzes the synthesis of phosphatidylglycerophosphate by transferring a phosphatidyl group from CDP-diacylglycerol to glycerol 3-phosphate. The sequence is that of Probable phosphatidylglycerophosphate synthase from Mycobacterium tuberculosis (strain CDC 1551 / Oshkosh).